We begin with the raw amino-acid sequence, 782 residues long: Protein bicaudal D (782 aa).

The stretch at 15-77 forms a coiled coil; that stretch reads VQDLQMEVER…RHELDITQEA (63 aa). A Phosphoserine modification is found at serine 103. Positions 107-249 form a coiled coil; the sequence is ETSLNLQIFD…LETLQGEREA (143 aa). Residues serine 285, serine 288, and serine 305 each carry the phosphoserine modification. The residue at position 306 (threonine 306) is a Phosphothreonine. The residue at position 310 (serine 310) is a Phosphoserine. Coiled coils occupy residues 320-368 and 444-477; these read SEIH…FMSR and TTTLRNEVTNLKNKLLATEQKSLDLQSDVQTLTH. Serine 528 is modified (phosphoserine). Coiled-coil stretches lie at residues 603 to 630 and 695 to 743; these read EKVNTEEMEELQEQIVKLKSLLSVKREQ and CEEY…MEMD. An interaction with Rab6 region spans residues 699–722; sequence VTQVDDLNRQLEAAEEEKKTLNQL. Positions 744–782 are disordered; sequence REMRHVRRPMPAQRGTSGKSSFSTRPSSRNPASSNANPF. Residues 757-767 are compositionally biased toward polar residues; sequence RGTSGKSSFST. The span at 768–782 shows a compositional bias: low complexity; sequence RPSSRNPASSNANPF.

This sequence belongs to the BicD family. As to quaternary structure, may homodimerize but does not interact with BicDR. Interacts (via C-terminal domain) with Rab6. In ovaries, expressed in oocyte and nurse cells.

The protein resides in the cytoplasm. It localises to the cytoskeleton. This protein is essential for differentiation. It may play a role in localizing of Nanos (a maternal determinant) activity in oocytes. Functions redundantly with BicDR. During oogenesis, plays a specific role, together with Rab6 but independently of Sec5, in the polarization of the oocyte microtubule cytoskeleton, in oskar mRNA localization and in the anterodorsal secretion of grk. Plays a role in the biogenesis of annulate lamellae containing nuclear pore complex components. During macrochaetae development, together with BicDR, involved in Rab 6 and Spn-F stability and distribution and actin cytoskeleton organization. The polypeptide is Protein bicaudal D (Drosophila melanogaster (Fruit fly)).